The sequence spans 255 residues: Hemin import ATP-binding protein HmuV (255 aa).

Residues 2-238 enclose the ABC transporter domain; sequence LRVENLSIRR…EPLRAVFGLE (237 aa). Residue 34–41 participates in ATP binding; it reads GPNGAGKS.

This sequence belongs to the ABC transporter superfamily. Heme (hemin) importer (TC 3.A.1.14.5) family. The complex is composed of two ATP-binding proteins (HmuV), two transmembrane proteins (HmuU) and a solute-binding protein (HmuT).

The protein resides in the cell inner membrane. Part of the ABC transporter complex HmuTUV involved in hemin import. Responsible for energy coupling to the transport system. This is Hemin import ATP-binding protein HmuV from Pseudomonas aeruginosa (strain ATCC 15692 / DSM 22644 / CIP 104116 / JCM 14847 / LMG 12228 / 1C / PRS 101 / PAO1).